A 151-amino-acid chain; its full sequence is Small ribosomal subunit protein uS15 (151 aa).

The segment covering 1-16 (MPHRSRDKKGRSRSVR) has biased composition (basic residues). A disordered region spans residues 1–20 (MPHRSRDKKGRSRSVRPAHP).

This sequence belongs to the universal ribosomal protein uS15 family. Part of the 30S ribosomal subunit.

This chain is Small ribosomal subunit protein uS15, found in Pyrobaculum aerophilum (strain ATCC 51768 / DSM 7523 / JCM 9630 / CIP 104966 / NBRC 100827 / IM2).